A 219-amino-acid chain; its full sequence is Guanylate kinase (219 aa).

Residues 15-194 enclose the Guanylate kinase-like domain; it reads GLMFVLSSPS…AFAEVQSILK (180 aa). 22–29 is a binding site for ATP; the sequence is SPSGAGKT.

This sequence belongs to the guanylate kinase family.

It is found in the cytoplasm. The enzyme catalyses GMP + ATP = GDP + ADP. Its function is as follows. Essential for recycling GMP and indirectly, cGMP. This is Guanylate kinase from Nitrobacter winogradskyi (strain ATCC 25391 / DSM 10237 / CIP 104748 / NCIMB 11846 / Nb-255).